The chain runs to 650 residues: Glycoprotein 105 (650 aa).

Residues 1–32 (MATARLGVMRPPRSCALIFLCAFSMATAPTNA) form a helical; Signal-anchor for type II membrane protein membrane-spanning segment. Topologically, residues 33 to 650 (TAHRRAGTVK…RFPHVGIGSY (618 aa)) are virion surface. Asn-52, Asn-290, Asn-332, Asn-338, Asn-359, Asn-422, Asn-516, and Asn-552 each carry an N-linked (GlcNAc...) asparagine; by host glycan.

In terms of assembly, associates with the gp82-gp105 complex. N-Glycosylated.

Its subcellular location is the virion membrane. This is Glycoprotein 105 (U96/U97/U98/U99/U100) from Homo sapiens (Human).